The sequence spans 409 residues: Glutamyl-tRNA(Gln) amidotransferase subunit D (409 aa).

The 323-residue stretch at 68-390 (RKISVLATGG…DLFRDLFRKN (323 aa)) folds into the Asparaginase/glutaminase domain. Catalysis depends on residues threonine 78, threonine 152, aspartate 153, and lysine 230.

It belongs to the asparaginase 1 family. GatD subfamily. In terms of assembly, heterodimer of GatD and GatE.

It carries out the reaction L-glutamyl-tRNA(Gln) + L-glutamine + ATP + H2O = L-glutaminyl-tRNA(Gln) + L-glutamate + ADP + phosphate + H(+). Its function is as follows. Allows the formation of correctly charged Gln-tRNA(Gln) through the transamidation of misacylated Glu-tRNA(Gln) in organisms which lack glutaminyl-tRNA synthetase. The reaction takes place in the presence of glutamine and ATP through an activated gamma-phospho-Glu-tRNA(Gln). The GatDE system is specific for glutamate and does not act on aspartate. This chain is Glutamyl-tRNA(Gln) amidotransferase subunit D, found in Thermoplasma acidophilum (strain ATCC 25905 / DSM 1728 / JCM 9062 / NBRC 15155 / AMRC-C165).